A 132-amino-acid chain; its full sequence is ATP synthase epsilon chain (132 aa).

The protein belongs to the ATPase epsilon chain family. In terms of assembly, F-type ATPases have 2 components, CF(1) - the catalytic core - and CF(0) - the membrane proton channel. CF(1) has five subunits: alpha(3), beta(3), gamma(1), delta(1), epsilon(1). CF(0) has three main subunits: a, b and c.

The protein resides in the cell membrane. In terms of biological role, produces ATP from ADP in the presence of a proton gradient across the membrane. This Bacillus caldotenax protein is ATP synthase epsilon chain (atpC).